The chain runs to 481 residues: Cysteine protease atg-4.1 (481 aa).

Cys-112 functions as the Nucleophile in the catalytic mechanism. Catalysis depends on residues Asp-313 and His-315. The interval 462 to 481 is disordered; that stretch reads DVHTEEEDADEDNDDDVANA.

The protein belongs to the peptidase C54 family.

It is found in the cytoplasm. It catalyses the reaction [protein]-C-terminal L-amino acid-glycyl-phosphatidylethanolamide + H2O = [protein]-C-terminal L-amino acid-glycine + a 1,2-diacyl-sn-glycero-3-phosphoethanolamine. Cysteine protease required for autophagy. Cleaves the C-terminal amino acid of ATG8 family proteins lgg-1, to reveal a C-terminal glycine. Exposure of the glycine at the C-terminus is essential for ATG8 proteins conjugation to phosphatidylethanolamine (PE) and insertion to membranes, which is necessary for autophagy. Its cleavage activity is functionally redundant to atg-4.2, but it cleaves lgg-1 precursors more efficiently than atg-4.2. Acts redundantly with atg-4.2 to promote the lgg-1 delipidation to release the protein from membranes, which facilitates multiple events during macroautophagy. Unlike atg-4.2 does not seem to be required for autophagosome maturation. The protein is Cysteine protease atg-4.1 of Caenorhabditis elegans.